Reading from the N-terminus, the 510-residue chain is Guanosine import ATP-binding protein NupO (510 aa).

2 consecutive ABC transporter domains span residues 5–240 and 257–501; these read IEML…VGRE and LAID…AGST. 37 to 44 is an ATP binding site; the sequence is GENGAGKS.

It belongs to the ABC transporter superfamily. The complex is composed of two ATP-binding proteins (NupO), two transmembrane proteins (NupP and NupQ) and a solute-binding protein (NupN).

It localises to the cell membrane. Functionally, part of an ABC transporter complex involved in the uptake of guanosine. Responsible for energy coupling to the transport system. May be a nucleoside transporter of broad specificity but with various affinities for different substrates. The sequence is that of Guanosine import ATP-binding protein NupO from Bacillus subtilis (strain 168).